Consider the following 861-residue polypeptide: MELHLTPRLKQRPAQAAACERYVDRLPVSSELRSELLADPSMPASAGISIDPRDAQAAIEQLQSRLSAREPAKGETPEPGGSTYGSVGRRFSLAYGNPQVAGEPLLKRRPDGTVHVDTGPEPQRSSMVPRQWPPHIVTGWVRNTWRRMLGRPPVPETWDTLHDGPDAEGKWHPAGSHRRWFLLGLVVAQTTLATYFMTKVLPYHGADLLEIAILVLFAVLFSWVSAGFWTAMMGFLVLAKGGDRHLISRSAAPDAPLAPDARTAVIMPICNEDVTRVFAGLRATYESLGRTGHLANFDFIVLSDSGNPDLRTAEVDAWMEVCRAVGGFGRIFYRWRRHRVKRKTGNVADFCRRWGSKYRYMVVLDADSVMSGDCLATLVRLMEANPGAGIIQTSPLAVGRETLYARVQQFATRVYGPLFTAGLHYWQLGESHYWGHNAIIRVKPFMEHCALAPLPGRGPLSGEILSHDFVEAALMRRAGWGVWIAYDLHGSYEELPPNLLDEVKRDRRWCQGNLMNFRLWLKQGFHMVHRAVFLTGIMAYLSAPLWFLFLLLSTAMLARHALVPPEYFTQPYQLFPTWPEWHPEKALALFSATATLLFLPKVASILLLVRQARQYGGLPRLVMSMLIEVVLSALLAPTRMLFHTKFVIAAYSGWGISWKSPPREDAETTWGEAVRRHGSHTLLGLAWGALVYWLNPSFVLWLLPIVGSLALSIPLSVMLSRVSFGRASREAGLFMIPEEALPPREIVETQQHVEQATETPNFVDAVVDPVTNALMCATASARVVQPASAKERHAALVQHALTGGPRALTASQRHILLGDPFALSKLHELVWGSPLADAGWKNIRLLVRRAPNVLPLRPRVA.

Disordered stretches follow at residues 65-89 (RLSA…SVGR) and 101-129 (AGEP…SMVP). Basic and acidic residues-rich tracts occupy residues 67–76 (SAREPAKGET) and 105–114 (LLKRRPDGTV). The next 6 helical transmembrane spans lie at 181 to 201 (FLLG…TKVL), 208 to 228 (LLEI…SAGF), 532 to 552 (VFLT…FLLL), 589 to 609 (LFSA…LLLV), 616 to 636 (GGLP…ALLA), and 698 to 718 (FVLW…LSVM).

Belongs to the glycosyltransferase 2 family. OpgH subfamily.

The protein resides in the cell inner membrane. The protein operates within glycan metabolism; osmoregulated periplasmic glucan (OPG) biosynthesis. In terms of biological role, involved in the biosynthesis of osmoregulated periplasmic glucans (OPGs). This is Glucans biosynthesis glucosyltransferase H from Cupriavidus pinatubonensis (strain JMP 134 / LMG 1197) (Cupriavidus necator (strain JMP 134)).